The following is a 549-amino-acid chain: Glucose-6-phosphate isomerase (549 aa).

Residue glutamate 355 is the Proton donor of the active site. Active-site residues include histidine 387 and lysine 515.

Belongs to the GPI family.

It is found in the cytoplasm. It catalyses the reaction alpha-D-glucose 6-phosphate = beta-D-fructose 6-phosphate. Its pathway is carbohydrate biosynthesis; gluconeogenesis. The protein operates within carbohydrate degradation; glycolysis; D-glyceraldehyde 3-phosphate and glycerone phosphate from D-glucose: step 2/4. Catalyzes the reversible isomerization of glucose-6-phosphate to fructose-6-phosphate. In Histophilus somni (strain 129Pt) (Haemophilus somnus), this protein is Glucose-6-phosphate isomerase.